The following is a 697-amino-acid chain: Elongation factor G 2 (697 aa).

The tr-type G domain occupies 5-280; sequence SKYRNIGIFA…AVVDYLPAPN (276 aa). Residues 14–21, 78–82, and 132–135 each bind GTP; these read AHVDAGKT, DTPGH, and NKLD.

Belongs to the TRAFAC class translation factor GTPase superfamily. Classic translation factor GTPase family. EF-G/EF-2 subfamily.

Its subcellular location is the cytoplasm. Functionally, catalyzes the GTP-dependent ribosomal translocation step during translation elongation. During this step, the ribosome changes from the pre-translocational (PRE) to the post-translocational (POST) state as the newly formed A-site-bound peptidyl-tRNA and P-site-bound deacylated tRNA move to the P and E sites, respectively. Catalyzes the coordinated movement of the two tRNA molecules, the mRNA and conformational changes in the ribosome. This Shewanella sp. (strain MR-4) protein is Elongation factor G 2.